Consider the following 290-residue polypeptide: 4-hydroxy-tetrahydrodipicolinate synthase (290 aa).

Threonine 44 lines the pyruvate pocket. Catalysis depends on tyrosine 132, which acts as the Proton donor/acceptor. Residue lysine 160 is the Schiff-base intermediate with substrate of the active site. Isoleucine 202 contributes to the pyruvate binding site.

Belongs to the DapA family. In terms of assembly, homotetramer; dimer of dimers.

The protein localises to the cytoplasm. It carries out the reaction L-aspartate 4-semialdehyde + pyruvate = (2S,4S)-4-hydroxy-2,3,4,5-tetrahydrodipicolinate + H2O + H(+). The protein operates within amino-acid biosynthesis; L-lysine biosynthesis via DAP pathway; (S)-tetrahydrodipicolinate from L-aspartate: step 3/4. In terms of biological role, catalyzes the condensation of (S)-aspartate-beta-semialdehyde [(S)-ASA] and pyruvate to 4-hydroxy-tetrahydrodipicolinate (HTPA). The sequence is that of 4-hydroxy-tetrahydrodipicolinate synthase from Geobacter metallireducens (strain ATCC 53774 / DSM 7210 / GS-15).